Consider the following 282-residue polypeptide: Putative quercetin 2,3-dioxygenase VC_A0969 (282 aa).

The tract at residues methionine 1 to glycine 21 is disordered. The a divalent metal cation site is built by histidine 59, histidine 61, histidine 103, and glutamate 105.

Belongs to the pirin family. It depends on a divalent metal cation as a cofactor.

It carries out the reaction quercetin + O2 = 2-(3,4-dihydroxybenzoyloxy)-4,6-dihydroxybenzoate + CO. It participates in flavonoid metabolism; quercetin degradation. Putative quercetin 2,3-dioxygenase. The sequence is that of Putative quercetin 2,3-dioxygenase VC_A0969 from Vibrio cholerae serotype O1 (strain ATCC 39315 / El Tor Inaba N16961).